Reading from the N-terminus, the 147-residue chain is uncharacterized protein (147 aa).

One can recognise an HTH LytTR-type domain in the interval 44-147 (LVGYIDKEIH…LKSIKERLSI (104 aa)).

It localises to the cytoplasm. This is an uncharacterized protein from Staphylococcus aureus (strain MRSA252).